The chain runs to 192 residues: Protein Syd (192 aa).

Belongs to the Syd family.

The protein localises to the cell inner membrane. Interacts with the SecY protein in vivo. May bind preferentially to an uncomplexed state of SecY, thus functioning either as a chelating agent for excess SecY in the cell or as a regulatory factor that negatively controls the translocase function. This Hahella chejuensis (strain KCTC 2396) protein is Protein Syd.